Reading from the N-terminus, the 191-residue chain is Dirigent protein 3 (191 aa).

A signal peptide spans 1–21 (MSKLILILTAQILLLTATALA). Residues asparagine 96 and asparagine 131 are each glycosylated (N-linked (GlcNAc...) asparagine).

This sequence belongs to the plant dirigent protein family. As to quaternary structure, homodimer.

It is found in the secreted. It localises to the extracellular space. The protein localises to the apoplast. Dirigent proteins impart stereoselectivity on the phenoxy radical-coupling reaction, yielding optically active lignans from two molecules of coniferyl alcohol in the biosynthesis of lignans, flavonolignans, and alkaloids and thus plays a central role in plant secondary metabolism. The protein is Dirigent protein 3 (DIR3) of Arabidopsis thaliana (Mouse-ear cress).